The primary structure comprises 663 residues: MPKSWSRVVISSVAPAIDGGQWPIKRAVGEQVEVTAGVLVDSHDALAVELVVRHASEETEHVTRMPHVENDEYAGAFEVSAPGRYLYRVRAWINRFATWQDQFRRRVEGGEPPSEIESELTAGASLLDEAAEHAPEDDREMLTAHIEAFENGNAEAALGDEIAELARRHAPHHQQTSSATYEVFVDPERARTGAWYEFFPRSVRDDDEHATLDEAAERLPRIQEMGFDIVYLPPIHPIGETNRKGPDDAPEAGPDDPGSPWAIGGFLADGSKGGHKSVHPKLGGIEAFDRFVETAHDLGLEVALDVAFQCSPDHPYVEEHPEWFYHRPDGSLRYAENPPKKYKDVHPINFETEAWPALWAELKSVFEYWIDHGVTTFRVDNPHTKPFAFWQWCLRELREDTPELVVLSEAFTRPKTMYHLAKLGFNNSYTYFTWRNTPDALEAYGEELFHTEAAEYFRPNFWPNTPDILHDELVDGGRPAHKSRFVLAATMSSTYGVYGPPFEHVDTQQRDHKEEYARNEKYEIRTWDWNDPTSLQPFMARVNRLRNENPALQQTRSIRFLDTQHPDLIAYSKAAGDNLIVVVVSLDPHSECEGQLVLPIHDLGLPADEAFSAHDLLHDAHYTWQGTHHYLRLSPDRPAHIFRLEPAGTSEQTHAAYDRLVHA.

The disordered stretch occupies residues 238–266 (IGETNRKGPDDAPEAGPDDPGSPWAIGGF). Positions 244, 309, and 344 each coordinate alpha-maltose 1-phosphate. D380 functions as the Nucleophile in the catalytic mechanism. N381 contributes to the alpha-maltose 1-phosphate binding site. The active-site Proton donor is the E409. 521–522 (KY) contacts alpha-maltose 1-phosphate.

This sequence belongs to the glycosyl hydrolase 13 family. GlgE subfamily. In terms of assembly, homodimer.

It carries out the reaction alpha-maltose 1-phosphate + [(1-&gt;4)-alpha-D-glucosyl](n) = [(1-&gt;4)-alpha-D-glucosyl](n+2) + phosphate. Its function is as follows. Maltosyltransferase that uses maltose 1-phosphate (M1P) as the sugar donor to elongate linear or branched alpha-(1-&gt;4)-glucans. Is involved in a branched alpha-glucan biosynthetic pathway from trehalose, together with TreS, Mak and GlgB. This Salinibacter ruber (strain DSM 13855 / M31) protein is Alpha-1,4-glucan:maltose-1-phosphate maltosyltransferase.